Here is a 163-residue protein sequence, read N- to C-terminus: Nucleotide-binding protein DET1318 (163 aa).

It belongs to the YajQ family.

Functionally, nucleotide-binding protein. This is Nucleotide-binding protein DET1318 from Dehalococcoides mccartyi (strain ATCC BAA-2266 / KCTC 15142 / 195) (Dehalococcoides ethenogenes (strain 195)).